The following is a 216-amino-acid chain: uncharacterized protein (216 aa).

The helical transmembrane segment at 5 to 25 threads the bilayer; that stretch reads YVKALVAVTVALGVLLPSTIS. Low complexity-rich tracts occupy residues 28–67 and 89–108; these read KSFSGRSSSSYSSRSSSSSYSGSYKSSPKSSYSSGSSSSS and KASSSSSKKSSGTFSGATSK. A disordered region spans residues 28–115; sequence KSFSGRSSSS…TSKVTGKTYS (88 aa). Helical transmembrane passes span 137–157 and 183–203; these read GFAPSGWFGYYSGFTMGMFMI and IAWIVDIIALIIILIIVIALI.

It localises to the cell membrane. This is an uncharacterized protein from Bacillus subtilis (strain 168).